We begin with the raw amino-acid sequence, 101 residues long: NAD(P)H-quinone oxidoreductase subunit 4L, chloroplastic (101 aa).

3 helical membrane passes run 2 to 22 (MLEY…YGLI), 32 to 52 (MCLE…SDFF), and 61 to 81 (ILSI…PAIV).

Belongs to the complex I subunit 4L family. In terms of assembly, NDH is composed of at least 16 different subunits, 5 of which are encoded in the nucleus.

The protein resides in the plastid. Its subcellular location is the chloroplast thylakoid membrane. It carries out the reaction a plastoquinone + NADH + (n+1) H(+)(in) = a plastoquinol + NAD(+) + n H(+)(out). It catalyses the reaction a plastoquinone + NADPH + (n+1) H(+)(in) = a plastoquinol + NADP(+) + n H(+)(out). In terms of biological role, NDH shuttles electrons from NAD(P)H:plastoquinone, via FMN and iron-sulfur (Fe-S) centers, to quinones in the photosynthetic chain and possibly in a chloroplast respiratory chain. The immediate electron acceptor for the enzyme in this species is believed to be plastoquinone. Couples the redox reaction to proton translocation, and thus conserves the redox energy in a proton gradient. The polypeptide is NAD(P)H-quinone oxidoreductase subunit 4L, chloroplastic (Populus alba (White poplar)).